A 290-amino-acid polypeptide reads, in one-letter code: Small ribosomal subunit biogenesis GTPase RsgA (290 aa).

The 158-residue stretch at 62-219 (RTCLKRPAVA…VADTPGFSRL (158 aa)) folds into the CP-type G domain. GTP contacts are provided by residues 111–114 (NKAD) and 161–169 (GPSGVGKSS). Zn(2+)-binding residues include Cys-243, Cys-248, His-250, and Cys-256.

This sequence belongs to the TRAFAC class YlqF/YawG GTPase family. RsgA subfamily. Monomer. Associates with 30S ribosomal subunit, binds 16S rRNA. Requires Zn(2+) as cofactor.

The protein localises to the cytoplasm. In terms of biological role, one of several proteins that assist in the late maturation steps of the functional core of the 30S ribosomal subunit. Helps release RbfA from mature subunits. May play a role in the assembly of ribosomal proteins into the subunit. Circularly permuted GTPase that catalyzes slow GTP hydrolysis, GTPase activity is stimulated by the 30S ribosomal subunit. The protein is Small ribosomal subunit biogenesis GTPase RsgA of Moorella thermoacetica (strain ATCC 39073 / JCM 9320).